Consider the following 309-residue polypeptide: 4-hydroxy-3-methylbut-2-enyl diphosphate reductase (309 aa).

Cysteine 12 contacts [4Fe-4S] cluster. Histidine 41 and histidine 74 together coordinate (2E)-4-hydroxy-3-methylbut-2-enyl diphosphate. Residues histidine 41 and histidine 74 each contribute to the dimethylallyl diphosphate site. Residues histidine 41 and histidine 74 each coordinate isopentenyl diphosphate. Cysteine 96 is a [4Fe-4S] cluster binding site. Histidine 124 lines the (2E)-4-hydroxy-3-methylbut-2-enyl diphosphate pocket. Dimethylallyl diphosphate is bound at residue histidine 124. Histidine 124 serves as a coordination point for isopentenyl diphosphate. The active-site Proton donor is the glutamate 126. Threonine 167 serves as a coordination point for (2E)-4-hydroxy-3-methylbut-2-enyl diphosphate. Cysteine 197 is a binding site for [4Fe-4S] cluster. Serine 225, serine 226, asparagine 227, and serine 269 together coordinate (2E)-4-hydroxy-3-methylbut-2-enyl diphosphate. Serine 225, serine 226, asparagine 227, and serine 269 together coordinate dimethylallyl diphosphate. Residues serine 225, serine 226, asparagine 227, and serine 269 each contribute to the isopentenyl diphosphate site.

Belongs to the IspH family. Requires [4Fe-4S] cluster as cofactor.

The catalysed reaction is isopentenyl diphosphate + 2 oxidized [2Fe-2S]-[ferredoxin] + H2O = (2E)-4-hydroxy-3-methylbut-2-enyl diphosphate + 2 reduced [2Fe-2S]-[ferredoxin] + 2 H(+). It carries out the reaction dimethylallyl diphosphate + 2 oxidized [2Fe-2S]-[ferredoxin] + H2O = (2E)-4-hydroxy-3-methylbut-2-enyl diphosphate + 2 reduced [2Fe-2S]-[ferredoxin] + 2 H(+). Its pathway is isoprenoid biosynthesis; dimethylallyl diphosphate biosynthesis; dimethylallyl diphosphate from (2E)-4-hydroxy-3-methylbutenyl diphosphate: step 1/1. The protein operates within isoprenoid biosynthesis; isopentenyl diphosphate biosynthesis via DXP pathway; isopentenyl diphosphate from 1-deoxy-D-xylulose 5-phosphate: step 6/6. Functionally, catalyzes the conversion of 1-hydroxy-2-methyl-2-(E)-butenyl 4-diphosphate (HMBPP) into a mixture of isopentenyl diphosphate (IPP) and dimethylallyl diphosphate (DMAPP). Acts in the terminal step of the DOXP/MEP pathway for isoprenoid precursor biosynthesis. The sequence is that of 4-hydroxy-3-methylbut-2-enyl diphosphate reductase from Shewanella pealeana (strain ATCC 700345 / ANG-SQ1).